A 131-amino-acid chain; its full sequence is Large ribosomal subunit protein uL22 (131 aa).

It belongs to the universal ribosomal protein uL22 family. In terms of assembly, part of the 50S ribosomal subunit.

Functionally, this protein binds specifically to 23S rRNA; its binding is stimulated by other ribosomal proteins, e.g. L4, L17, and L20. It is important during the early stages of 50S assembly. It makes multiple contacts with different domains of the 23S rRNA in the assembled 50S subunit and ribosome. Its function is as follows. The globular domain of the protein is located near the polypeptide exit tunnel on the outside of the subunit, while an extended beta-hairpin is found that lines the wall of the exit tunnel in the center of the 70S ribosome. This chain is Large ribosomal subunit protein uL22, found in Phytoplasma mali (strain AT).